Consider the following 156-residue polypeptide: Aspartate 1-decarboxylase (156 aa).

Ser-29 serves as the catalytic Schiff-base intermediate with substrate; via pyruvic acid. Ser-29 carries the pyruvic acid (Ser) modification. Thr-61 is a substrate binding site. Tyr-62 acts as the Proton donor in catalysis. Residue 77-79 (GAA) participates in substrate binding.

Belongs to the PanD family. Heterooctamer of four alpha and four beta subunits. The cofactor is pyruvate. Is synthesized initially as an inactive proenzyme, which is activated by self-cleavage at a specific serine bond to produce a beta-subunit with a hydroxyl group at its C-terminus and an alpha-subunit with a pyruvoyl group at its N-terminus.

Its subcellular location is the cytoplasm. It catalyses the reaction L-aspartate + H(+) = beta-alanine + CO2. It functions in the pathway cofactor biosynthesis; (R)-pantothenate biosynthesis; beta-alanine from L-aspartate: step 1/1. Catalyzes the pyruvoyl-dependent decarboxylation of aspartate to produce beta-alanine. This chain is Aspartate 1-decarboxylase, found in Rhodopirellula baltica (strain DSM 10527 / NCIMB 13988 / SH1).